Here is a 513-residue protein sequence, read N- to C-terminus: Transmembrane protein 151B (513 aa).

The tract at residues 1–29 is disordered; the sequence is MSPAAPVTESSAAEVHREQTDAPREPQRP. Residues 14-28 show a composition bias toward basic and acidic residues; that stretch reads EVHREQTDAPREPQR. The next 3 membrane-spanning stretches (helical) occupy residues 46 to 66, 93 to 113, and 274 to 294; these read CLLLSLLMYCCVIAMTWCQVT, YIYIPVAFLVMLYVVYLVECW, and LPWYASTCSFWLAAAFTLSWP. N-linked (GlcNAc...) asparagine glycosylation is found at Asn366, Asn418, and Asn505.

This sequence belongs to the TMEM151 family.

The protein localises to the membrane. This Danio rerio (Zebrafish) protein is Transmembrane protein 151B (tmem151b).